Here is a 358-residue protein sequence, read N- to C-terminus: 3-dehydroquinate synthase (358 aa).

Residues 69–74 (DGEQYK), 103–107 (GVIGD), 127–128 (TT), Lys140, Lys149, and 167–170 (TLNT) each bind NAD(+). Residues Glu182, His245, and His262 each contribute to the Zn(2+) site.

This sequence belongs to the sugar phosphate cyclases superfamily. Dehydroquinate synthase family. Co(2+) serves as cofactor. Zn(2+) is required as a cofactor. It depends on NAD(+) as a cofactor.

Its subcellular location is the cytoplasm. It catalyses the reaction 7-phospho-2-dehydro-3-deoxy-D-arabino-heptonate = 3-dehydroquinate + phosphate. The protein operates within metabolic intermediate biosynthesis; chorismate biosynthesis; chorismate from D-erythrose 4-phosphate and phosphoenolpyruvate: step 2/7. In terms of biological role, catalyzes the conversion of 3-deoxy-D-arabino-heptulosonate 7-phosphate (DAHP) to dehydroquinate (DHQ). This is 3-dehydroquinate synthase from Hydrogenovibrio crunogenus (strain DSM 25203 / XCL-2) (Thiomicrospira crunogena).